We begin with the raw amino-acid sequence, 158 residues long: Xanthine-guanine phosphoribosyltransferase (158 aa).

Residues 38–39 (RG) and 90–98 (DDLVDTGGT) each bind 5-phospho-alpha-D-ribose 1-diphosphate. Asp91 lines the Mg(2+) pocket. 2 residues coordinate guanine: Asp94 and Ile137. Asp94 and Ile137 together coordinate xanthine. GMP is bound by residues 94-98 (DTGGT) and 136-137 (WI).

It belongs to the purine/pyrimidine phosphoribosyltransferase family. XGPT subfamily. As to quaternary structure, homotetramer. It depends on Mg(2+) as a cofactor.

Its subcellular location is the cell inner membrane. It catalyses the reaction GMP + diphosphate = guanine + 5-phospho-alpha-D-ribose 1-diphosphate. The catalysed reaction is XMP + diphosphate = xanthine + 5-phospho-alpha-D-ribose 1-diphosphate. The enzyme catalyses IMP + diphosphate = hypoxanthine + 5-phospho-alpha-D-ribose 1-diphosphate. It functions in the pathway purine metabolism; GMP biosynthesis via salvage pathway; GMP from guanine: step 1/1. It participates in purine metabolism; XMP biosynthesis via salvage pathway; XMP from xanthine: step 1/1. Functionally, purine salvage pathway enzyme that catalyzes the transfer of the ribosyl-5-phosphate group from 5-phospho-alpha-D-ribose 1-diphosphate (PRPP) to the N9 position of the 6-oxopurines guanine and xanthine to form the corresponding ribonucleotides GMP (guanosine 5'-monophosphate) and XMP (xanthosine 5'-monophosphate), with the release of PPi. To a lesser extent, also acts on hypoxanthine. In Buchnera aphidicola subsp. Acyrthosiphon pisum (strain APS) (Acyrthosiphon pisum symbiotic bacterium), this protein is Xanthine-guanine phosphoribosyltransferase.